A 1002-amino-acid polypeptide reads, in one-letter code: Mitogen-activated protein kinase kinase kinase 21 (1002 aa).

The disordered stretch occupies residues 1–26 (MALPVAEGTADTPLSPARDDSGSTSS). An SH3 domain is found at 24-88 (TSSGMWAALY…PASYVAPCGP (65 aa)). One can recognise a Protein kinase domain in the interval 110-390 (LELKELIGAG…QLTAIEEAVL (281 aa)). ATP is bound by residues 116 to 124 (IGAGGFGQV) and Lys-137. The active-site Proton acceptor is the Asp-247. At Thr-283 the chain carries Phosphothreonine; by autocatalysis. The residue at position 287 (Ser-287) is a Phosphoserine; by autocatalysis and MAP4K1. Leucine-zipper stretches follow at residues 409–430 (IQQM…EEEL) and 444–466 (LRRR…LNVL). Disordered regions lie at residues 508 to 531 (TVQA…PPGS), 574 to 604 (GCTW…NSPW), 640 to 689 (HRKP…VGAP), 721 to 778 (AQAP…SHSS), 797 to 823 (LGNA…SGCE), and 878 to 899 (QSAP…RDLA). Phosphoserine is present on residues Ser-512, Ser-527, and Ser-531. Thr-576 is subject to Phosphothreonine. Positions 584-596 (TKERPEGRERVRP) are enriched in basic and acidic residues. Phosphoserine is present on Ser-598. The span at 661–677 (DSQREDSSEAESREEGS) shows a compositional bias: basic and acidic residues. Low complexity-rich tracts occupy residues 740-758 (QPAS…QPSA) and 766-778 (STLL…SHSS).

This sequence belongs to the protein kinase superfamily. STE Ser/Thr protein kinase family. MAP kinase kinase kinase subfamily. As to quaternary structure, homodimer. Interacts with TLR4. It depends on Mg(2+) as a cofactor. Post-translationally, autophosphorylation on serine and threonine residues within the activation loop plays a role in enzyme activation.

It catalyses the reaction L-seryl-[protein] + ATP = O-phospho-L-seryl-[protein] + ADP + H(+). The enzyme catalyses L-threonyl-[protein] + ATP = O-phospho-L-threonyl-[protein] + ADP + H(+). Homodimerization via the leucine zipper domains is required for autophosphorylation and subsequent activation. Negative regulator of TLR4 signaling. Does not activate JNK1/MAPK8 pathway, p38/MAPK14, nor ERK2/MAPK1 pathways. The sequence is that of Mitogen-activated protein kinase kinase kinase 21 (Map3k21) from Mus musculus (Mouse).